A 198-amino-acid polypeptide reads, in one-letter code: Recombination protein RecR (198 aa).

Residues 57-72 form a C4-type zinc finger; that stretch reads CSICGNLTDDDPCHIC. Positions 80–175 constitute a Toprim domain; that stretch reads TTILVVEDAK…KVTRLARGLA (96 aa).

Belongs to the RecR family.

May play a role in DNA repair. It seems to be involved in an RecBC-independent recombinational process of DNA repair. It may act with RecF and RecO. The sequence is that of Recombination protein RecR from Streptococcus pyogenes serotype M1.